We begin with the raw amino-acid sequence, 247 residues long: Probable transcriptional regulatory protein LPC_0711 (247 aa).

Belongs to the TACO1 family.

The protein resides in the cytoplasm. The chain is Probable transcriptional regulatory protein LPC_0711 from Legionella pneumophila (strain Corby).